The sequence spans 347 residues: NADH-ubiquinone oxidoreductase chain 2 (347 aa).

Transmembrane regions (helical) follow at residues 3 to 23 (PLILIMIMLTVILGTTIVMMS), 25 to 45 (HWLMIWMGFEMNMLAVIPLLM), 59 to 79 (YFLTQATASMLLMLAIIINLL), 96 to 116 (IIMTLAMAMKMGLAPLHFWVP), 148 to 170 (GINLDLILLMSMMSIAIGGWGGL), 178 to 198 (ILAYSSIAHMGWMASILAFNP), 200 to 220 (MTLLNLLLYILMTTTTFMLFM), 247 to 267 (IMLSLGGLPPLVGFLPKWMII), 276 to 296 (ITLATLMAITALLNLFFYMRL), and 326 to 346 (LPMLIILSTITLPLAPAITLL).

It belongs to the complex I subunit 2 family. Core subunit of respiratory chain NADH dehydrogenase (Complex I) which is composed of 45 different subunits. Interacts with TMEM242.

The protein localises to the mitochondrion inner membrane. The catalysed reaction is a ubiquinone + NADH + 5 H(+)(in) = a ubiquinol + NAD(+) + 4 H(+)(out). In terms of biological role, core subunit of the mitochondrial membrane respiratory chain NADH dehydrogenase (Complex I) which catalyzes electron transfer from NADH through the respiratory chain, using ubiquinone as an electron acceptor. Essential for the catalytic activity and assembly of complex I. This chain is NADH-ubiquinone oxidoreductase chain 2, found in Saccopteryx leptura (Lesser sac-winged bat).